A 580-amino-acid polypeptide reads, in one-letter code: Mucolipin-1 (580 aa).

The tract at residues 1 to 38 is disordered; it reads MTDPAGPRGSETERLLTPNPGYGTQVGPSPAPPTPPEE. The Cytoplasmic portion of the chain corresponds to 1–65; sequence MTDPAGPRGS…FRAKGRKPCK (65 aa). A Phosphoserine modification is found at Ser10. Positions 11-16 match the Dileucine motif; mediates targeting to lysosomes motif; sequence ETERLL. An interaction with phosphoinositides region spans residues 42-62; it reads RRRLKYFFMSPCDKFRAKGRK. The helical transmembrane segment at 66 to 86 threads the bilayer; it reads LMLQVVKILVVTVQLILFGLS. The Extracellular segment spans residues 87–298; it reads NQLAVTFREE…VFRHGDNSFR (212 aa). Positions 107 to 121 are extracellular/lumenal pore loop; sequence LGYSDGADDTFAAYT. Cys166 and Cys192 form a disulfide bridge. Asn230 carries N-linked (GlcNAc...) asparagine glycosylation. An intrachain disulfide couples Cys253 to Cys284. A helical membrane pass occupies residues 299 to 321; the sequence is LLFDVVVILTCSLSFLLCARSLL. Over 322-350 the chain is Cytoplasmic; it reads RGFLLQNEFVRFMWRQRRRVISLWERLEF. The helical transmembrane segment at 351–371 threads the bilayer; it reads VNGWYILLVTSDVLTISGTIM. Residues 372-382 are Extracellular-facing; that stretch reads KIGIEAKNLAS. Residues 383–405 traverse the membrane as a helical segment; the sequence is YDVCSILLGTSTLLVWVGVIRYL. Residues 406 to 427 are Cytoplasmic-facing; it reads TFFHNYNILIATLRVALPSVMR. Residues 428–448 traverse the membrane as a helical segment; it reads FCCCVAVIYLGYCFCGWIVLG. Residues 449–456 lie on the Extracellular side of the membrane; sequence PYHVKFRS. Positions 457–477 form an intramembrane region, pore-forming; that stretch reads LSMVSECLFSLINGDDMFVTF. The Selectivity filter motif lies at 469–474; sequence NGDDMF. Residues 478–491 lie on the Extracellular side of the membrane; it reads AAMQAQQGRSSLVW. A helical transmembrane segment spans residues 492 to 513; sequence LFSQLYLYSFISLFIYMVLSLF. At 514-580 the chain is on the cytoplasmic side; the sequence is IALITGAYDT…PSEEHSLLVN (67 aa). A phosphoserine; by PAK mark is found at Ser557 and Ser559. The segment at 565–567 is required for palmitoylation and association with membranes; it reads CCC. The Dileucine internalization motif; mediates AP2 complex-dependent internalization motif lies at 573–578; sequence EEHSLL.

Belongs to the transient receptor (TC 1.A.4) family. Polycystin subfamily. MCOLN1 sub-subfamily. In terms of assembly, homotetramer. Homooligomer. Can heterooligomerize with MCOLN2 or MCOLN3; heteromeric assemblies have different channel properties as compared to the respective homooligomers and may be tissue-specific. Interacts with PDCD6. Interacts with TMEM163. Interacts with LAPTM4B. In terms of processing, palmitoylated; involved in association with membranes. Phosphorylation by PKA inhibits channel activity. Dephosphorylation increases activity. Post-translationally, proteolytically cleaved probably involving multiple lysosomal proteases including cathepsin B; inhibits lysosomal channel activity.

The protein localises to the late endosome membrane. The protein resides in the lysosome membrane. Its subcellular location is the cytoplasmic vesicle membrane. It localises to the cell projection. It is found in the phagocytic cup. The protein localises to the cytoplasmic vesicle. The protein resides in the phagosome membrane. Its subcellular location is the cell membrane. It catalyses the reaction Ca(2+)(in) = Ca(2+)(out). The catalysed reaction is Fe(2+)(in) = Fe(2+)(out). It carries out the reaction Mg(2+)(in) = Mg(2+)(out). The enzyme catalyses K(+)(in) = K(+)(out). It catalyses the reaction Na(+)(in) = Na(+)(out). With respect to regulation, channel activity is controlled by multiple regulatory mechanisms in different subcellular compartments. Channel function is transiently modulated by changes in Ca(2+) in a pH-dependent manner; pH changes modify the aggregation state of unitary channels; a negative cooperativity between extracellular/lumenal Ca(2+) and H(+) is suggested. Regulated by phosphoinositides in a compartment-specific manner: in lysosomes activated by PtdIns(3,5)P2 (Phosphatidylinositol 3,5-bisphosphate) and at the plasma membrane inhibited by PtdIns(4,5)P2 (Phosphatidylinositol 4,5-bisphosphate). In terms of biological role, nonselective cation channel probably playing a role in the regulation of membrane trafficking events and of metal homeostasis. Acts as a Ca(2+)-permeable cation channel with inwardly rectifying activity. Proposed to play a major role in Ca(2+) release from late endosome and lysosome vesicles to the cytoplasm, which is important for many lysosome-dependent cellular events, including the fusion and trafficking of these organelles, exocytosis and autophagy. Required for efficient uptake of large particles in macrophages in which Ca(2+) release from the lysosomes triggers lysosomal exocytosis. May also play a role in phagosome-lysosome fusion. Involved in lactosylceramide trafficking indicative for a role in the regulation of late endocytic membrane fusion/fission events. By mediating lysosomal Ca(2+) release is involved in regulation of mTORC1 signaling and in mTOR/TFEB-dependent lysosomal adaptation to environmental cues such as nutrient levels. Seems to act as lysosomal active oxygen species (ROS) sensor involved in ROS-induced TFEB activation and autophagy. Also functions as a Fe(2+) permeable channel in late endosomes and lysosomes. Also permeable to Mg(2+), Na(+). K(+) and Cs(+). Proposed to play a role in zinc homeostasis probably implicating its association with TMEM163. In adaptive immunity, TRPML2 and TRPML1 may play redundant roles in the function of the specialized lysosomes of B cells. May contribute to cellular lipase activity within the late endosomal pathway or at the cell surface which may be involved in processes of membrane reshaping and vesiculation, especially the growth of tubular structures. However, it is not known, whether it conveys the enzymatic activity directly, or merely facilitates the activity of an associated phospholipase. The sequence is that of Mucolipin-1 (MCOLN1) from Macaca fascicularis (Crab-eating macaque).